The chain runs to 211 residues: Urease accessory protein UreG (211 aa).

11–18 (GPVGAGKT) lines the GTP pocket.

The protein belongs to the SIMIBI class G3E GTPase family. UreG subfamily. As to quaternary structure, homodimer. UreD, UreF and UreG form a complex that acts as a GTP-hydrolysis-dependent molecular chaperone, activating the urease apoprotein by helping to assemble the nickel containing metallocenter of UreC. The UreE protein probably delivers the nickel.

The protein resides in the cytoplasm. Facilitates the functional incorporation of the urease nickel metallocenter. This process requires GTP hydrolysis, probably effectuated by UreG. In Actinobacillus pleuropneumoniae (Haemophilus pleuropneumoniae), this protein is Urease accessory protein UreG.